Here is a 458-residue protein sequence, read N- to C-terminus: Purple acid phosphatase 23 (458 aa).

An N-terminal signal peptide occupies residues 1–19 (MTLLIMITLTSISLLLAAA). N-linked (GlcNAc...) asparagine glycosylation is found at Asn-59, Asn-121, and Asn-136. Asp-194 contributes to the Fe cation binding site. N-linked (GlcNAc...) asparagine glycosylation occurs at Asn-200. Positions 221 and 224 each coordinate Fe cation. Mn(2+) is bound at residue Asp-221. Asn-278 serves as a coordination point for Mn(2+). Asn-278 contributes to the substrate binding site. A glycan (N-linked (GlcNAc...) asparagine) is linked at Asn-331. His-360 lines the Mn(2+) pocket. Catalysis depends on His-370, which acts as the Proton donor. Position 397 (His-397) interacts with Mn(2+). 397–399 (HVH) contributes to the substrate binding site. Position 399 (His-399) interacts with Fe cation. N-linked (GlcNAc...) asparagine glycosylation is found at Asn-409 and Asn-455.

Belongs to the metallophosphoesterase superfamily. Purple acid phosphatase family. Homodimer. It depends on Fe cation as a cofactor. Requires Mn(2+) as cofactor. In terms of tissue distribution, specifically expressed in flowers.

Its subcellular location is the secreted. It carries out the reaction a phosphate monoester + H2O = an alcohol + phosphate. Acid phosphatase activity with ATP, ADP, dATP, pyrophosphate, polyphosphate, phosphoserine and phosphothreonine. Low or no activity with phosphotyrosine, AMP and phytate. This Arabidopsis thaliana (Mouse-ear cress) protein is Purple acid phosphatase 23 (PAP23).